We begin with the raw amino-acid sequence, 406 residues long: Protein transport protein HofC homolog (406 aa).

3 helical membrane-spanning segments follow: residues 167–187 (MVLGISLLLTLALLLFIVPQF), 214–234 (QNIGILLFFVLSFFLFYYFYL), and 379–399 (MMVIIGSLIGIIMMGMYLPIF).

Belongs to the GSP F family.

The protein localises to the cell inner membrane. The sequence is that of Protein transport protein HofC homolog (hofC) from Haemophilus influenzae (strain ATCC 51907 / DSM 11121 / KW20 / Rd).